The primary structure comprises 422 residues: Serine--tRNA ligase (422 aa).

Position 229 to 231 (229 to 231 (TAE)) interacts with L-serine. ATP contacts are provided by residues 260–262 (RRE) and valine 276. L-serine is bound at residue glutamate 283. Position 349-352 (349-352 (EVTS)) interacts with ATP. Threonine 384 serves as a coordination point for L-serine.

The protein belongs to the class-II aminoacyl-tRNA synthetase family. Type-1 seryl-tRNA synthetase subfamily. Homodimer. The tRNA molecule binds across the dimer.

It localises to the cytoplasm. The catalysed reaction is tRNA(Ser) + L-serine + ATP = L-seryl-tRNA(Ser) + AMP + diphosphate + H(+). It catalyses the reaction tRNA(Sec) + L-serine + ATP = L-seryl-tRNA(Sec) + AMP + diphosphate + H(+). The protein operates within aminoacyl-tRNA biosynthesis; selenocysteinyl-tRNA(Sec) biosynthesis; L-seryl-tRNA(Sec) from L-serine and tRNA(Sec): step 1/1. Its function is as follows. Catalyzes the attachment of serine to tRNA(Ser). Is also able to aminoacylate tRNA(Sec) with serine, to form the misacylated tRNA L-seryl-tRNA(Sec), which will be further converted into selenocysteinyl-tRNA(Sec). The polypeptide is Serine--tRNA ligase (Treponema denticola (strain ATCC 35405 / DSM 14222 / CIP 103919 / JCM 8153 / KCTC 15104)).